The sequence spans 102 residues: Guanyl-specific ribonuclease Pc (102 aa).

2 disulfides stabilise this stretch: C2-C10 and C6-C101. Residue H38 is part of the active site. The active-site Proton acceptor is E56. Catalysis depends on H90, which acts as the Proton donor.

The protein belongs to the ribonuclease N1/T1 family.

The enzyme catalyses [RNA] containing guanosine + H2O = an [RNA fragment]-3'-guanosine-3'-phosphate + a 5'-hydroxy-ribonucleotide-3'-[RNA fragment].. The sequence is that of Guanyl-specific ribonuclease Pc from Penicillium chrysogenum (Penicillium notatum).